The sequence spans 135 residues: Small ribosomal subunit protein uS11 (135 aa).

The disordered stretch occupies residues 1-26; the sequence is MPPKSRTAGGARKTRRKEKKNVSHGH. A compositionally biased stretch (basic residues) spans 12-23; the sequence is RKTRRKEKKNVS.

This sequence belongs to the universal ribosomal protein uS11 family. Part of the 30S ribosomal subunit. Interacts with proteins S7 and S18. Binds to IF-3.

Located on the platform of the 30S subunit, it bridges several disparate RNA helices of the 16S rRNA. Forms part of the Shine-Dalgarno cleft in the 70S ribosome. In Beutenbergia cavernae (strain ATCC BAA-8 / DSM 12333 / CCUG 43141 / JCM 11478 / NBRC 16432 / NCIMB 13614 / HKI 0122), this protein is Small ribosomal subunit protein uS11.